Consider the following 156-residue polypeptide: ATP synthase subunit b', chloroplastic (156 aa).

A helical transmembrane segment spans residues 24–44; that stretch reads ATLPLVAIQFILLMVLLNILL.

It belongs to the ATPase B chain family. As to quaternary structure, F-type ATPases have 2 components, F(1) - the catalytic core - and F(0) - the membrane proton channel. F(1) has five subunits: alpha(3), beta(3), gamma(1), delta(1), epsilon(1). F(0) has four main subunits: a(1), b(1), b'(1) and c(10-14). The alpha and beta chains form an alternating ring which encloses part of the gamma chain. F(1) is attached to F(0) by a central stalk formed by the gamma and epsilon chains, while a peripheral stalk is formed by the delta, b and b' chains.

The protein resides in the plastid. It is found in the chloroplast thylakoid membrane. F(1)F(0) ATP synthase produces ATP from ADP in the presence of a proton or sodium gradient. F-type ATPases consist of two structural domains, F(1) containing the extramembraneous catalytic core and F(0) containing the membrane proton channel, linked together by a central stalk and a peripheral stalk. During catalysis, ATP synthesis in the catalytic domain of F(1) is coupled via a rotary mechanism of the central stalk subunits to proton translocation. Functionally, component of the F(0) channel, it forms part of the peripheral stalk, linking F(1) to F(0). The b'-subunit is a diverged and duplicated form of b found in plants and photosynthetic bacteria. This Phaeodactylum tricornutum (strain CCAP 1055/1) protein is ATP synthase subunit b', chloroplastic.